The primary structure comprises 312 residues: MSSSEIYRYYYKTSEDLQGFKTAAAEPYFNPMAAYNPGVTHYQFNGNTLASSSNYLSANGFISFEQASSDGWISSSPASHRSESPEYVDLNTMYNGGCNNMAQNQQYGMIMEQSVVSTAPAIPVASPPAVEVMGSSNVGTCKTIPASAGPKPKRSYTKKNQPSTTATSTPTAAAESSASVNLYTEEFQNFDFDNSALFDDSVEDDEDLMLFSGGEDFDGNDGSFDLADGENQDAAAGGSGKKRRGKQITPVVKRKRRLAANARERRRMQNLNQAFDRLRQYLPCLGNDRQLSKHETLQMAQTYISALGDLLR.

Disordered regions lie at residues 136–174 (SNVGTCKTIPASAGPKPKRSYTKKNQPSTTATSTPTAAA) and 220–248 (NDGSFDLADGENQDAAAGGSGKKRRGKQI). Positions 162-174 (PSTTATSTPTAAA) are enriched in low complexity. The region spanning 255–307 (KRRLAANARERRRMQNLNQAFDRLRQYLPCLGNDRQLSKHETLQMAQTYISAL) is the bHLH domain.

As to quaternary structure, efficient DNA binding requires dimerization with another bHLH protein. Forms a heterodimer with Daughterless. In terms of tissue distribution, proneural clusters and sense organ precursors of the chordotonal organs, optic furrow of the eye-antennal disk and developing brain lobe.

The protein localises to the nucleus. Developmental protein involved in neurogenesis. Required for the formation of chordotonal organs and photoreceptors. Seems to bind to E boxes. Specifically required for the photoreceptor R8 selection. The chain is Protein atonal (ato) from Drosophila melanogaster (Fruit fly).